The sequence spans 232 residues: Ribose-5-phosphate isomerase A (232 aa).

Residues 31-34 (TGST), 87-90 (DGAD), and 100-103 (KGGG) contribute to the substrate site. E109 functions as the Proton acceptor in the catalytic mechanism. A substrate-binding site is contributed by K127.

Belongs to the ribose 5-phosphate isomerase family. Homodimer.

It catalyses the reaction aldehydo-D-ribose 5-phosphate = D-ribulose 5-phosphate. Its pathway is carbohydrate degradation; pentose phosphate pathway; D-ribose 5-phosphate from D-ribulose 5-phosphate (non-oxidative stage): step 1/1. Its function is as follows. Catalyzes the reversible conversion of ribose-5-phosphate to ribulose 5-phosphate. In Bifidobacterium longum (strain DJO10A), this protein is Ribose-5-phosphate isomerase A.